The following is a 102-amino-acid chain: Flagellar hook-basal body complex protein FliE (102 aa).

The protein belongs to the FliE family.

The protein localises to the bacterial flagellum basal body. The protein is Flagellar hook-basal body complex protein FliE of Halalkalibacterium halodurans (strain ATCC BAA-125 / DSM 18197 / FERM 7344 / JCM 9153 / C-125) (Bacillus halodurans).